Here is a 261-residue protein sequence, read N- to C-terminus: Indole-3-glycerol phosphate synthase (261 aa).

It belongs to the TrpC family.

The enzyme catalyses 1-(2-carboxyphenylamino)-1-deoxy-D-ribulose 5-phosphate + H(+) = (1S,2R)-1-C-(indol-3-yl)glycerol 3-phosphate + CO2 + H2O. It functions in the pathway amino-acid biosynthesis; L-tryptophan biosynthesis; L-tryptophan from chorismate: step 4/5. This is Indole-3-glycerol phosphate synthase from Paraburkholderia phytofirmans (strain DSM 17436 / LMG 22146 / PsJN) (Burkholderia phytofirmans).